Consider the following 156-residue polypeptide: Small ribosomal subunit protein uS7 (156 aa).

It belongs to the universal ribosomal protein uS7 family. In terms of assembly, part of the 30S ribosomal subunit. Contacts proteins S9 and S11.

In terms of biological role, one of the primary rRNA binding proteins, it binds directly to 16S rRNA where it nucleates assembly of the head domain of the 30S subunit. Is located at the subunit interface close to the decoding center, probably blocks exit of the E-site tRNA. The polypeptide is Small ribosomal subunit protein uS7 (Macrococcus caseolyticus (strain JCSC5402) (Macrococcoides caseolyticum)).